The sequence spans 317 residues: Tyrosine--tRNA ligase (317 aa).

Residue Y33 participates in L-tyrosine binding. The 'HIGH' region motif lies at P38–H46. L-tyrosine is bound by residues Y155, Q159, D162, and Q177. Positions K211–S215 match the 'KMSKS' region motif. S214 contacts ATP.

It belongs to the class-I aminoacyl-tRNA synthetase family. TyrS type 3 subfamily. As to quaternary structure, homodimer.

The protein localises to the cytoplasm. The enzyme catalyses tRNA(Tyr) + L-tyrosine + ATP = L-tyrosyl-tRNA(Tyr) + AMP + diphosphate + H(+). Catalyzes the attachment of tyrosine to tRNA(Tyr) in a two-step reaction: tyrosine is first activated by ATP to form Tyr-AMP and then transferred to the acceptor end of tRNA(Tyr). In Methanococcoides burtonii (strain DSM 6242 / NBRC 107633 / OCM 468 / ACE-M), this protein is Tyrosine--tRNA ligase.